Consider the following 95-residue polypeptide: MSIDQSTAAKVAKLARIKVEEDALPALAEEFNTILGFIEQLNEVDVEGVEPMTSVTPQRLKRREDVVTDGNQQDKVLANAPDAREGFFAVPKVVE.

Belongs to the GatC family. Heterotrimer of A, B and C subunits.

The catalysed reaction is L-glutamyl-tRNA(Gln) + L-glutamine + ATP + H2O = L-glutaminyl-tRNA(Gln) + L-glutamate + ADP + phosphate + H(+). The enzyme catalyses L-aspartyl-tRNA(Asn) + L-glutamine + ATP + H2O = L-asparaginyl-tRNA(Asn) + L-glutamate + ADP + phosphate + 2 H(+). Its function is as follows. Allows the formation of correctly charged Asn-tRNA(Asn) or Gln-tRNA(Gln) through the transamidation of misacylated Asp-tRNA(Asn) or Glu-tRNA(Gln) in organisms which lack either or both of asparaginyl-tRNA or glutaminyl-tRNA synthetases. The reaction takes place in the presence of glutamine and ATP through an activated phospho-Asp-tRNA(Asn) or phospho-Glu-tRNA(Gln). The sequence is that of Aspartyl/glutamyl-tRNA(Asn/Gln) amidotransferase subunit C from Ruegeria sp. (strain TM1040) (Silicibacter sp.).